The sequence spans 102 residues: Small ribosomal subunit protein uS10 (102 aa).

The protein belongs to the universal ribosomal protein uS10 family. Part of the 30S ribosomal subunit.

Functionally, involved in the binding of tRNA to the ribosomes. This chain is Small ribosomal subunit protein uS10, found in Methanosarcina mazei (strain ATCC BAA-159 / DSM 3647 / Goe1 / Go1 / JCM 11833 / OCM 88) (Methanosarcina frisia).